Reading from the N-terminus, the 147-residue chain is Putative nickel-responsive regulator (147 aa).

Ni(2+)-binding residues include histidine 76, histidine 87, histidine 89, and cysteine 95.

This sequence belongs to the transcriptional regulatory CopG/NikR family. It depends on Ni(2+) as a cofactor.

Transcriptional regulator. The sequence is that of Putative nickel-responsive regulator from Rhodopseudomonas palustris (strain TIE-1).